We begin with the raw amino-acid sequence, 375 residues long: Aminomethyltransferase (375 aa).

It belongs to the GcvT family. The glycine cleavage system is composed of four proteins: P, T, L and H.

The enzyme catalyses N(6)-[(R)-S(8)-aminomethyldihydrolipoyl]-L-lysyl-[protein] + (6S)-5,6,7,8-tetrahydrofolate = N(6)-[(R)-dihydrolipoyl]-L-lysyl-[protein] + (6R)-5,10-methylene-5,6,7,8-tetrahydrofolate + NH4(+). Functionally, the glycine cleavage system catalyzes the degradation of glycine. The protein is Aminomethyltransferase of Cupriavidus pinatubonensis (strain JMP 134 / LMG 1197) (Cupriavidus necator (strain JMP 134)).